The sequence spans 159 residues: Cyclic pyranopterin monophosphate synthase (159 aa).

Residues 75–77 (LCH) and 113–114 (ME) contribute to the substrate site. Residue D128 is part of the active site.

This sequence belongs to the MoaC family. Homohexamer; trimer of dimers.

It carries out the reaction (8S)-3',8-cyclo-7,8-dihydroguanosine 5'-triphosphate = cyclic pyranopterin phosphate + diphosphate. Its pathway is cofactor biosynthesis; molybdopterin biosynthesis. Catalyzes the conversion of (8S)-3',8-cyclo-7,8-dihydroguanosine 5'-triphosphate to cyclic pyranopterin monophosphate (cPMP). In Yersinia pseudotuberculosis serotype IB (strain PB1/+), this protein is Cyclic pyranopterin monophosphate synthase.